The primary structure comprises 178 residues: MAELITVARPYAEAVFRLAKDEGRLAQWSEALAWLAASLAEPAVSAAVANPERTEAEVVTLLGGILGDKAGHEVRNLLEALAENHRLALLPAIAEQFEQLKQVEEGVLTADIASAYPLTEAQSAELAATLKAKYGKEIVLKASVDPSLIGGVRILVGDEVIDASVRGKLHTMAISLKS.

It belongs to the ATPase delta chain family. F-type ATPases have 2 components, F(1) - the catalytic core - and F(0) - the membrane proton channel. F(1) has five subunits: alpha(3), beta(3), gamma(1), delta(1), epsilon(1). F(0) has three main subunits: a(1), b(2) and c(10-14). The alpha and beta chains form an alternating ring which encloses part of the gamma chain. F(1) is attached to F(0) by a central stalk formed by the gamma and epsilon chains, while a peripheral stalk is formed by the delta and b chains.

Its subcellular location is the cell inner membrane. Its function is as follows. F(1)F(0) ATP synthase produces ATP from ADP in the presence of a proton or sodium gradient. F-type ATPases consist of two structural domains, F(1) containing the extramembraneous catalytic core and F(0) containing the membrane proton channel, linked together by a central stalk and a peripheral stalk. During catalysis, ATP synthesis in the catalytic domain of F(1) is coupled via a rotary mechanism of the central stalk subunits to proton translocation. This protein is part of the stalk that links CF(0) to CF(1). It either transmits conformational changes from CF(0) to CF(1) or is implicated in proton conduction. The sequence is that of ATP synthase subunit delta from Laribacter hongkongensis (strain HLHK9).